The sequence spans 1751 residues: Non-reducing polyketide synthase afvB (1751 aa).

The interval phenylalanine 19–histidine 249 is N-terminal acylcarrier protein transacylase domain (SAT). One can recognise a Ketosynthase family 3 (KS3) domain in the interval histidine 381–glutamate 811. Active-site for beta-ketoacyl synthase activity residues include cysteine 554, histidine 689, and histidine 730. Residues phenylalanine 910 to valine 1228 are malonyl-CoA:ACP transacylase (MAT) domain. A product template (PT) domain region spans residues threonine 1291–aspartate 1607. Residues histidine 1295–serine 1429 are N-terminal hotdog fold. In terms of domain architecture, PKS/mFAS DH spans histidine 1295 to serine 1603. Histidine 1327 serves as the catalytic Proton acceptor; for dehydratase activity. The segment at leucine 1456–serine 1603 is C-terminal hotdog fold. Aspartate 1514 functions as the Proton donor; for dehydratase activity in the catalytic mechanism. A disordered region spans residues aspartate 1610 to asparagine 1670. Over residues glutamine 1612–glutamate 1657 the composition is skewed to polar residues. The Carrier domain occupies asparagine 1670–glutamine 1747. Serine 1707 bears the O-(pantetheine 4'-phosphoryl)serine mark.

Pantetheine 4'-phosphate is required as a cofactor. As to expression, expressed mainly in sclerotia, with expression levels 20-fold and 10-fold greater than the expression levels of this gene found in mycelium and conidia, respectively.

Its pathway is secondary metabolite biosynthesis. Functionally, non-reducing polyketide synthase (NRPKS); part of the gene cluster that mediates the biosynthesis of aflavarin, a bicoumarin that exhibits anti-insectan activity against the fungivorous beetle C.hemipterus. Catalyzes the formation of the aromatic polyketide from acetyl coenzyme A and seven malonyl coenzyme A molecules. The protein is Non-reducing polyketide synthase afvB of Aspergillus flavus (strain ATCC 200026 / FGSC A1120 / IAM 13836 / NRRL 3357 / JCM 12722 / SRRC 167).